The sequence spans 145 residues: Large ribosomal subunit protein uL16 (145 aa).

Over residues 1 to 17 the composition is skewed to basic residues; sequence MLMPKRVKHRRVHRGRM. The interval 1-22 is disordered; that stretch reads MLMPKRVKHRRVHRGRMTGKAT.

It belongs to the universal ribosomal protein uL16 family. As to quaternary structure, part of the 50S ribosomal subunit.

In terms of biological role, binds 23S rRNA and is also seen to make contacts with the A and possibly P site tRNAs. The sequence is that of Large ribosomal subunit protein uL16 from Ruminiclostridium cellulolyticum (strain ATCC 35319 / DSM 5812 / JCM 6584 / H10) (Clostridium cellulolyticum).